The sequence spans 28 residues: Chassatide C11 (28 aa).

3 disulfides stabilise this stretch: Cys-3–Cys-19, Cys-7–Cys-21, and Cys-12–Cys-26. Met-16 carries the post-translational modification Methionine sulfoxide; in form chassatide chaC11A.

It belongs to the cyclotide family. Bracelet subfamily. As to expression, expressed in fruit, pedicel and stem but not in leaf and root (at protein level).

In terms of biological role, chassatide C11: Probably participates in a plant defense mechanism. Active against E.coli ATCC 25922 (MIC=8.5 uM) but not against S.aureus ATCC 12600 or S.epidermidis ATCC 14990. Has cytotoxic and hemolytic activity. Its function is as follows. Chassatide C11A: Probably participates in a plant defense mechanism. Has no activity against bacteria up to a concentration of 80 uM. Has no cytotoxic and no hemolytic activity. The polypeptide is Chassatide C11 (Chassalia chartacea (Chassalia curviflora)).